Here is a 788-residue protein sequence, read N- to C-terminus: Protein FAR1-RELATED SEQUENCE 5 (788 aa).

The 93-residue stretch at 87-179 (AFYNSYARRI…VKDHNHELVP (93 aa)) folds into the FAR1 domain. The MULE domain maps to 299–395 (TVTFDTTYRS…CKWHILKKCQ (97 aa)). The SWIM-type zinc finger occupies 584–616 (FNVLEMRANCSCQMFEFSGIICRHILAVFRVTN). The interval 713-733 (SSVTGGKHQQEVLAQPEPEDE) is disordered. Positions 731-768 (EDEMDKKINQLRNELELANRKCEAYRTNLLSVLKEMED) form a coiled coil.

It belongs to the FHY3/FAR1 family. As to expression, expressed in hypocotyls, rosette and cauline leaves, inflorescences stems, flowers and siliques.

Its subcellular location is the nucleus. Functionally, putative transcription activator involved in regulating light control of development. This is Protein FAR1-RELATED SEQUENCE 5 (FRS5) from Arabidopsis thaliana (Mouse-ear cress).